The primary structure comprises 2157 residues: Conidial yellow pigment biosynthesis polyketide synthase (2157 aa).

The interval 8 to 244 (YLFGDQTGDF…VMVPIHGPFH (237 aa)) is N-terminal acylcarrier protein transacylase domain (SAT). One can recognise a Ketosynthase family 3 (KS3) domain in the interval 376–807 (LSKIAIIGMS…GGNTALLLED (432 aa)). Catalysis depends on for beta-ketoacyl synthase activity residues Cys548, His683, and His725. Residues 912–1232 (FLFTGQGAQY…LSSLYLAGVD (321 aa)) form a malonyl-CoA:ACP transacylase (MAT) domain region. Residue Ser1001 is the For acyl/malonyl transferase activity of the active site. Residues 1290–1603 (TTSAQRVVES…RKILDIALPP (314 aa)) are product template (PT) domain. Positions 1294–1425 (QRVVESRDDG…CEVKLFDCMA (132 aa)) are N-terminal hotdog fold. The PKS/mFAS DH domain occupies 1294-1598 (QRVVESRDDG…FQALSRKILD (305 aa)). Residue His1326 is the Proton acceptor; for dehydratase activity of the active site. Positions 1453–1598 (AHRLRRGMVY…FQALSRKILD (146 aa)) are C-terminal hotdog fold. Asp1511 acts as the Proton donor; for dehydratase activity in catalysis. Positions 1607–1638 (SKAQTSPIQSSAPQKPIETAKPTSRPAPPVTM) are disordered. Polar residues predominate over residues 1608-1619 (KAQTSPIQSSAP). A Carrier 1 domain is found at 1645 to 1722 (SAGPSVVVRA…DFKRFVTQLS (78 aa)). Ser1682 is subject to O-(pantetheine 4'-phosphoryl)serine. The tract at residues 1725 to 1760 (VASDSSSTDRESEYSFNGDSCSGLSSPASPGTVSPP) is disordered. The segment covering 1741-1759 (NGDSCSGLSSPASPGTVSP) has biased composition (polar residues). Positions 1767 to 1844 (IHENGTMKEI…QIETALDLKP (78 aa)) constitute a Carrier 2 domain. Ser1804 carries the O-(pantetheine 4'-phosphoryl)serine modification. The disordered stretch occupies residues 1847–1888 (VPTAVPQSQPITLPQSQSTKQLSTRPTSSSDNHPPATSILLQ). The segment covering 1851–1878 (VPQSQPITLPQSQSTKQLSTRPTSSSDN) has biased composition (polar residues). Positions 1877–2149 (DNHPPATSIL…ELATFMKNAL (273 aa)) are claisen cyclase domain. Residue Ser1967 is the For thioesterase activity of the active site.

Requires pantetheine 4'-phosphate as cofactor.

The enzyme catalyses 6 malonyl-CoA + acetyl-CoA + 6 H(+) = naphtopyrone YWA1 + 6 CO2 + 7 CoA + H2O. It functions in the pathway polyketide biosynthesis; heptaketide naphthopyrone YWA1 biosynthesis. In terms of biological role, non-reducing polyketide synthase that condenses acetate units to form a heptaketide naphthopyrene YWA1, a yellow pigment found in mature asexual spores (conidia), via a polyketomethylene intermediate step. This Emericella nidulans (strain FGSC A4 / ATCC 38163 / CBS 112.46 / NRRL 194 / M139) (Aspergillus nidulans) protein is Conidial yellow pigment biosynthesis polyketide synthase.